Reading from the N-terminus, the 287-residue chain is Eukaryotic translation initiation factor 3 subunit G (287 aa).

Disordered regions lie at residues 1-34 and 159-184; these read MSKL…KDGT and TAGG…YVPP. The 79-residue stretch at 207-285 folds into the RRM domain; that stretch reads ATLRVTNVSE…LILRVEFAKR (79 aa).

Belongs to the eIF-3 subunit G family. Component of the eukaryotic translation initiation factor 3 (eIF-3) complex.

It is found in the cytoplasm. Its function is as follows. RNA-binding component of the eukaryotic translation initiation factor 3 (eIF-3) complex, which is involved in protein synthesis of a specialized repertoire of mRNAs and, together with other initiation factors, stimulates binding of mRNA and methionyl-tRNAi to the 40S ribosome. The eIF-3 complex specifically targets and initiates translation of a subset of mRNAs involved in cell proliferation. This subunit can bind 18S rRNA. This is Eukaryotic translation initiation factor 3 subunit G (tif35) from Aspergillus oryzae (strain ATCC 42149 / RIB 40) (Yellow koji mold).